Here is a 179-residue protein sequence, read N- to C-terminus: Large ribosomal subunit protein uL5 (179 aa).

It belongs to the universal ribosomal protein uL5 family. As to quaternary structure, part of the 50S ribosomal subunit; part of the 5S rRNA/L5/L18/L25 subcomplex. Contacts the 5S rRNA and the P site tRNA. Forms a bridge to the 30S subunit in the 70S ribosome.

In terms of biological role, this is one of the proteins that bind and probably mediate the attachment of the 5S RNA into the large ribosomal subunit, where it forms part of the central protuberance. In the 70S ribosome it contacts protein S13 of the 30S subunit (bridge B1b), connecting the 2 subunits; this bridge is implicated in subunit movement. Contacts the P site tRNA; the 5S rRNA and some of its associated proteins might help stabilize positioning of ribosome-bound tRNAs. This is Large ribosomal subunit protein uL5 from Staphylococcus aureus (strain MW2).